Consider the following 147-residue polypeptide: Ribosome maturation factor RimP (147 aa).

Belongs to the RimP family.

The protein localises to the cytoplasm. In terms of biological role, required for maturation of 30S ribosomal subunits. The sequence is that of Ribosome maturation factor RimP from Sulfurihydrogenibium sp. (strain YO3AOP1).